The following is a 547-amino-acid chain: Chaperonin GroEL 2 (547 aa).

Residues Thr30 to Pro33, Lys51, Asp87 to Thr91, Gly415, Asn479 to Ala481, and Asp495 each bind ATP. Residues Lys526–Met547 form a disordered region. The segment covering Ala533–Met547 has biased composition (gly residues).

It belongs to the chaperonin (HSP60) family. As to quaternary structure, forms a cylinder of 14 subunits composed of two heptameric rings stacked back-to-back. Interacts with the co-chaperonin GroES.

Its subcellular location is the cytoplasm. The catalysed reaction is ATP + H2O + a folded polypeptide = ADP + phosphate + an unfolded polypeptide.. Functionally, together with its co-chaperonin GroES, plays an essential role in assisting protein folding. The GroEL-GroES system forms a nano-cage that allows encapsulation of the non-native substrate proteins and provides a physical environment optimized to promote and accelerate protein folding. This Anaeromyxobacter sp. (strain Fw109-5) protein is Chaperonin GroEL 2.